We begin with the raw amino-acid sequence, 335 residues long: Fructose-1,6-bisphosphatase class 1 (335 aa).

4 residues coordinate Mg(2+): E89, D112, L114, and D115. Substrate-binding positions include 115-118 (DGSS), N208, Y241, and K271. E277 contacts Mg(2+).

It belongs to the FBPase class 1 family. Homotetramer. Mg(2+) serves as cofactor.

Its subcellular location is the cytoplasm. It carries out the reaction beta-D-fructose 1,6-bisphosphate + H2O = beta-D-fructose 6-phosphate + phosphate. It functions in the pathway carbohydrate biosynthesis; gluconeogenesis. This chain is Fructose-1,6-bisphosphatase class 1, found in Proteus mirabilis (strain HI4320).